Here is a 176-residue protein sequence, read N- to C-terminus: Tubulin polymerization-promoting protein family member 3 (176 aa).

An N-acetylalanine modification is found at Ala2.

Belongs to the TPPP family.

Its subcellular location is the cytoplasm. It is found in the cytoskeleton. In terms of biological role, regulator of microtubule dynamic that has microtubule bundling activity. Required for embryo implantation; possibly by regulating beta-catenin. Also required for decidualization via regulation of beta-catenin. The sequence is that of Tubulin polymerization-promoting protein family member 3 (TPPP3) from Bos taurus (Bovine).